The sequence spans 413 residues: MKYEKLLPRFLEYVKVNTRSDENSTTTPSTQALVEFAHKMGEDMKALGLKDVHYLESNGYVIGTIPANTDKKVRKIGLLAHLDTADFNAEGVNPQILENYDGESVIQLGDTEFTLDPKDFPNLKNYKGQTLVHTDGTTLLGSDDKSGVAEIMTLADYLLNINPDFEHGEIRVGFGPDEEIGVGADKFDVADFDVDFAYTVDGGPLGELQYETFSAAGAVIEFQGKNVHPGTAKNMMVNALQLAIDYHNALPEFDRPEKTEGREGFFHLLKLDGTPEEARAQYIIRDHEEGKFNERKALMQEIADKMNAELGQNRVKPVIKDQYYNMAQIIEKDMSIIDIAKKAMENLDIAPIIEPIRGGTDGSKISFMGLPTPNLFAGGENMHGRFEFVSVQTMEKAVDTLLEIIRLNNEVAK.

Residue His81 participates in Zn(2+) binding. Asp83 is an active-site residue. A Zn(2+)-binding site is contributed by Asp143. The active-site Proton acceptor is Glu178. Glu179, Asp201, and His383 together coordinate Zn(2+).

It belongs to the peptidase M20B family. Zn(2+) serves as cofactor.

It localises to the cytoplasm. It catalyses the reaction Release of the N-terminal residue from a tripeptide.. Cleaves the N-terminal amino acid of tripeptides. This Lactococcus lactis subsp. cremoris (Streptococcus cremoris) protein is Peptidase T.